Reading from the N-terminus, the 615-residue chain is MDQVSIEMSSTPRPTMVKSKSQLSLRRSLTITFKDLAYSVTVKKKKMQILKGVSGTVTPGELVAVFGPSGSGKTTLLDILANRKESGEISGAVLINGNEIDDDYKRLCSYVVQEDVLLPTITVRETLRFYADLKLPKSWTEKEKHERIEQILEQIGLSHRADAKIGGVLPGGIVLRGLSGGEKRRVSIGCGLVTSPSIVLLDEPTSGLDTTSAMAVMKTLVELTQQKSVTVICTIHQPRSEIFKLFTKIMVLAEGRLVYYGNRPVEHFTEIGFPFPDQTNPADYILDAVTTIKEEGRADEIADRLQSSYLDQANQESSSTLTQSQLGIINASGKRKINAYNNGLFTQFLVLWKRTGLDFIRNPSNCLVRFAVAVFVGLLFGACFSGLGMDEKGVQSRSAVLFYLVINMILQPFASISLFISKRTLFNAERASKLYHTLPYYLALMFFEILACIGTAFILGTITYWFADLNPGADKYFFAMAILTLAHLAGDFFMLIISCITVQVDTSFAVGAGVATIYQLFAGFFVPINALPKSFEWLHWCNFVYYSFEALMHNEFVGETVNCGQLACPTGRDVLINLGLNNRGKGINLIIVSSFAFAFFTMVFLCLHYFHREKR.

One can recognise an ABC transporter domain in the interval 31–279 (ITFKDLAYSV…EIGFPFPDQT (249 aa)). Residue 67 to 74 (GPSGSGKT) coordinates ATP. An ABC transmembrane type-2 domain is found at 364–610 (SNCLVRFAVA…TMVFLCLHYF (247 aa)). The next 6 helical transmembrane spans lie at 370–390 (FAVA…LGMD), 400–420 (VLFY…SLFI), 442–462 (LALM…LGTI), 477–497 (FFAM…MLII), 508–528 (FAVG…FVPI), and 587–607 (INLI…FLCL).

Belongs to the ABC transporter superfamily. ABCG family. Eye pigment precursor importer (TC 3.A.1.204) subfamily.

It is found in the membrane. Its function is as follows. May be involved in cell migration. This chain is ABC transporter G family member 22 (abcG22), found in Dictyostelium discoideum (Social amoeba).